The chain runs to 608 residues: N(6)-adenosine-methyltransferase MT-A70-like protein (608 aa).

Positions 250–265 (KKKQERRDEKELRPDV) are enriched in basic and acidic residues. Residues 250 to 272 (KKKQERRDEKELRPDVDAGENVT) are disordered. S-adenosyl-L-methionine-binding positions include 395 to 396 (DL) and aspartate 413. The interval 414–428 (PPWDIHMELPYGTMS) is gate loop 1. Residues 480–497 (QLQRIIRTGRTGHWLNHG) form an interphase loop region. Positions 483-496 (RIIRTGRTGHWLNH) are positively charged region required for RNA-binding. The gate loop 2 stretch occupies residues 525–533 (VRATSHKPD). Residues lysine 531, 554 to 557 (RPHN), and 567 to 568 (NQ) each bind S-adenosyl-L-methionine.

This sequence belongs to the MT-A70-like family. Component of the WMM complex, a N6-methyltransferase complex composed of a catalytic subcomplex, named MAC, and of an associated subcomplex, named MACOM. The MAC subcomplex is composed of Ime4/Mettl3 and Mettl14. The MACOM subcomplex is composed of fl(2)d, Flacc/Xio, Hakai, vir, and, in some cases of nito. In terms of tissue distribution, expressed in testes. In the ovaries, detected in germaria, prefollicle, follicle and polar cells (at protein levels). Detected in the ooplasm and in the cells of the 16-cell cyst of early stages (at protein levels).

The protein localises to the nucleus. It carries out the reaction an adenosine in mRNA + S-adenosyl-L-methionine = an N(6)-methyladenosine in mRNA + S-adenosyl-L-homocysteine + H(+). Catalytic component of the WMM complex, a complex that mediates N6-methyladenosine (m6A) methylation of mRNAs, a modification that plays a role in the efficiency of mRNA splicing and is required for sex determination. In the heterodimer formed with Mettl14, constitutes the catalytic core. Required for sex determination and dosage compensation via Sxl alternative splicing: m6A methylation acts as a key regulator of Sxl pre-mRNA and promotes female-specific alternative splicing of Sxl, which determines female physiognomy. M6A methylation is also required for neuronal functions. During oogenesis, required for egg chamber development probably as part of the N/Notch signaling. In Drosophila melanogaster (Fruit fly), this protein is N(6)-adenosine-methyltransferase MT-A70-like protein.